The chain runs to 419 residues: Arginine biosynthesis bifunctional protein ArgJ 1, mitochondrial (419 aa).

5 residues coordinate substrate: Lys177, Thr188, Glu275, Asn414, and Thr419. The Nucleophile role is filled by Thr188.

Belongs to the ArgJ family. Heterodimer of an alpha and a beta chain. In terms of processing, the alpha and beta chains are autoproteolytically processed from a single precursor protein within the mitochondrion.

The protein localises to the mitochondrion matrix. The enzyme catalyses N(2)-acetyl-L-ornithine + L-glutamate = N-acetyl-L-glutamate + L-ornithine. It catalyses the reaction L-glutamate + acetyl-CoA = N-acetyl-L-glutamate + CoA + H(+). Its pathway is amino-acid biosynthesis; L-arginine biosynthesis; L-ornithine and N-acetyl-L-glutamate from L-glutamate and N(2)-acetyl-L-ornithine (cyclic): step 1/1. The protein operates within amino-acid biosynthesis; L-arginine biosynthesis; N(2)-acetyl-L-ornithine from L-glutamate: step 1/4. Catalyzes two activities which are involved in the cyclic version of arginine biosynthesis: the synthesis of acetylglutamate from glutamate and acetyl-CoA, and of ornithine by transacetylation between acetylornithine and glutamate. The sequence is that of Arginine biosynthesis bifunctional protein ArgJ 1, mitochondrial from Sclerotinia sclerotiorum (strain ATCC 18683 / 1980 / Ss-1) (White mold).